The chain runs to 531 residues: Importin subunit alpha-3 (531 aa).

Residues 1-58 (MSLRPSAKTEVRRNRYKVAVDAEEGRRRREDNLVEIRKNKREENLQKKRFTSSMAFGS) form the IBB domain. ARM repeat units follow at residues 111-153 (INEV…TSEN), 154-198 (TNVI…CRDL), 199-236 (VLSY…RGKP), 237-281 (PPAF…DKIQ), 282-321 (AVIE…DDLQ), 322-364 (TQMV…NADQ), 365-405 (IQAV…GGTH), and 406-447 (DQIK…VVGE). The tract at residues 500–524 (DNEEEGNDENHAPQSGFQFGSTNVP) is disordered. Polar residues predominate over residues 511-524 (APQSGFQFGSTNVP).

Belongs to the importin alpha family. Forms a complex with importin subunit beta-1. Interacts with PRL1. Interacts with A.tumefaciens VirD2 and VirE2.

Its subcellular location is the nucleus. Binds to conventional NLS motifs and mediates nuclear protein import across the nuclear envelope. Acts as a cellular receptor for the nuclear import of the virD2 protein of Agrobacterium, but is not essential for Agrobacterium-mediated root transformation. May be involved in the regulation of pathogen-induced salicylic acid accumulation. The chain is Importin subunit alpha-3 from Arabidopsis thaliana (Mouse-ear cress).